The chain runs to 299 residues: ATP phosphoribosyltransferase (299 aa).

This sequence belongs to the ATP phosphoribosyltransferase family. Long subfamily. Mg(2+) serves as cofactor.

The protein localises to the cytoplasm. The catalysed reaction is 1-(5-phospho-beta-D-ribosyl)-ATP + diphosphate = 5-phospho-alpha-D-ribose 1-diphosphate + ATP. Its pathway is amino-acid biosynthesis; L-histidine biosynthesis; L-histidine from 5-phospho-alpha-D-ribose 1-diphosphate: step 1/9. Its activity is regulated as follows. Feedback inhibited by histidine. In terms of biological role, catalyzes the condensation of ATP and 5-phosphoribose 1-diphosphate to form N'-(5'-phosphoribosyl)-ATP (PR-ATP). Has a crucial role in the pathway because the rate of histidine biosynthesis seems to be controlled primarily by regulation of HisG enzymatic activity. This Shewanella denitrificans (strain OS217 / ATCC BAA-1090 / DSM 15013) protein is ATP phosphoribosyltransferase.